The following is a 133-amino-acid chain: Small ribosomal subunit protein uS11 (133 aa).

It belongs to the universal ribosomal protein uS11 family. Part of the 30S ribosomal subunit.

Functionally, located on the platform of the 30S subunit. In Aeropyrum pernix (strain ATCC 700893 / DSM 11879 / JCM 9820 / NBRC 100138 / K1), this protein is Small ribosomal subunit protein uS11.